The chain runs to 104 residues: Large ribosomal subunit protein uL24 (104 aa).

This sequence belongs to the universal ribosomal protein uL24 family. Part of the 50S ribosomal subunit.

Functionally, one of two assembly initiator proteins, it binds directly to the 5'-end of the 23S rRNA, where it nucleates assembly of the 50S subunit. Its function is as follows. One of the proteins that surrounds the polypeptide exit tunnel on the outside of the subunit. The polypeptide is Large ribosomal subunit protein uL24 (Bradyrhizobium sp. (strain ORS 278)).